Reading from the N-terminus, the 561-residue chain is Putative transport protein YbjL (561 aa).

Transmembrane regions (helical) follow at residues 8–28 (LLNG…LCLG), 32–52 (LGSI…LLGQ), 66–86 (FMLF…SIFF), 94–114 (MLAL…GKLF), and 158–178 (NLSL…IVGA). 2 RCK C-terminal domains span residues 200–288 (RGLD…SFRN) and 292–373 (VFDR…RIGF). Transmembrane regions (helical) follow at residues 383-403 (LLAF…TFQF), 406-426 (FSFG…LGFM), 451-471 (VFMA…LGAI), 475-495 (MLIA…LFGA), and 540-560 (AIAN…WPGL).

This sequence belongs to the AAE transporter (TC 2.A.81) family. YbjL subfamily.

The protein resides in the cell membrane. The sequence is that of Putative transport protein YbjL from Shigella sonnei (strain Ss046).